A 388-amino-acid chain; its full sequence is Ribonucleoside-diphosphate reductase subunit beta (388 aa).

Positions 84, 115, and 118 each coordinate Fe cation. Tyr122 is an active-site residue. Positions 212, 247, and 250 each coordinate Fe cation.

Belongs to the ribonucleoside diphosphate reductase small chain family. As to quaternary structure, heterodimer of a large and a small subunit. Fe cation serves as cofactor.

The enzyme catalyses a 2'-deoxyribonucleoside 5'-diphosphate + [thioredoxin]-disulfide + H2O = a ribonucleoside 5'-diphosphate + [thioredoxin]-dithiol. In terms of biological role, provides the precursors necessary for DNA synthesis. Catalyzes the biosynthesis of deoxyribonucleotides from the corresponding ribonucleotides. This Escherichia coli (Bacteriophage T4) protein is Ribonucleoside-diphosphate reductase subunit beta (NRDB).